The following is a 348-amino-acid chain: 3-isopropylmalate dehydrogenase (348 aa).

76 to 87 is a binding site for NAD(+); that stretch reads GPKWTDPNNRPE. Substrate is bound by residues Arg94, Arg104, Arg132, and Asp217. Mg(2+) is bound by residues Asp217, Asp241, and Asp245. 275 to 287 serves as a coordination point for NAD(+); the sequence is GSAPDIAGKNVAN.

This sequence belongs to the isocitrate and isopropylmalate dehydrogenases family. LeuB type 1 subfamily. As to quaternary structure, homodimer. Mg(2+) is required as a cofactor. It depends on Mn(2+) as a cofactor.

The protein resides in the cytoplasm. It carries out the reaction (2R,3S)-3-isopropylmalate + NAD(+) = 4-methyl-2-oxopentanoate + CO2 + NADH. It participates in amino-acid biosynthesis; L-leucine biosynthesis; L-leucine from 3-methyl-2-oxobutanoate: step 3/4. Its function is as follows. Catalyzes the oxidation of 3-carboxy-2-hydroxy-4-methylpentanoate (3-isopropylmalate) to 3-carboxy-4-methyl-2-oxopentanoate. The product decarboxylates to 4-methyl-2 oxopentanoate. The chain is 3-isopropylmalate dehydrogenase from Staphylococcus aureus (strain MRSA252).